The chain runs to 258 residues: Elongation factor Ts (258 aa).

The involved in Mg(2+) ion dislocation from EF-Tu stretch occupies residues 81 to 84; the sequence is TDFV. Residues 216–258 are disordered; that stretch reads GLKPAEAPKVEETPPAPPEEPAPEPAPAAESKPAKKGSAKKKK. Positions 229 to 241 are enriched in pro residues; the sequence is PPAPPEEPAPEPA. Positions 249–258 are enriched in basic residues; sequence AKKGSAKKKK.

The protein belongs to the EF-Ts family.

It is found in the cytoplasm. Functionally, associates with the EF-Tu.GDP complex and induces the exchange of GDP to GTP. It remains bound to the aminoacyl-tRNA.EF-Tu.GTP complex up to the GTP hydrolysis stage on the ribosome. This chain is Elongation factor Ts, found in Synechococcus sp. (strain JA-2-3B'a(2-13)) (Cyanobacteria bacterium Yellowstone B-Prime).